We begin with the raw amino-acid sequence, 465 residues long: uncharacterized protein (465 aa).

In terms of domain architecture, RAMA spans 6–91; it reads NVTLSNLIDF…LKLKREYLFR (86 aa). Disordered stretches follow at residues 95–377 and 392–465; these read TGKN…SNNQ and YNQQ…KSKS. Positions 117–137 are enriched in low complexity; the sequence is PQQQQQQQQQQQQQQQQQQQP. Residues 156–169 are compositionally biased toward acidic residues; the sequence is ETSDQDIDNDDDDA. A compositionally biased stretch (low complexity) spans 177 to 190; it reads TTTTTTTTTTTTTT. The segment covering 208–220 has biased composition (basic and acidic residues); that stretch reads PKEKKKEKKENIL. Residues 214-242 are a coiled coil; it reads EKKENILTKKKQQSLQYQQQLQLLQRQNS. Positions 226–263 are enriched in low complexity; sequence QSLQYQQQLQLLQRQNSPPSVSPSSSTSTSSSTSSPAS. The segment covering 264 to 294 has biased composition (polar residues); that stretch reads NQIFNSFGPNSQNHNQYGINYNSQQHQPQQY. A compositionally biased stretch (low complexity) spans 295–376; it reads NNNNNNNNNN…NNNINNNSNN (82 aa). The span at 392-407 shows a compositional bias: polar residues; sequence YNQQNPPKHQYPNNFL. Positions 424–442 are enriched in low complexity; it reads NQSQNQNQNQNQNQNQNQK. The span at 443 to 465 shows a compositional bias: basic residues; it reads SKSKSKSKSKFKSKSKSKSKSKS.

This is an uncharacterized protein from Dictyostelium discoideum (Social amoeba).